Consider the following 157-residue polypeptide: Homeobox protein DBX2 (157 aa).

A DNA-binding region (homeobox) is located at residues 9–68 (GILRRAVFSEDQRKALEKMFQKQKYISKTDRKKLAINLGLKESQVKIWFQNRRMKWRNSK). A disordered region spans residues 105–157 (SQEQTSPRWKEKSPGNSERLTSTQPPPRANSSQSPLYLYPDHDTANKAVTSSD). Polar residues predominate over residues 118-139 (PGNSERLTSTQPPPRANSSQSP).

The protein belongs to the H2.0 homeobox family. Localized to the central nervous system during embryogenesis. It is found restricted to the rostro-caudal and dorso-ventral regions of the hindbrain. In the ventricular zone of the spinal cord, it localizes to the dorsal part of the basal plate. In the adult, it is detected in ovary.

The protein resides in the nucleus. In terms of biological role, appears to perform a very early function in establishing the identity of a subset of cells that originate in the region of the ventricular zone in the developing spinal cord and in the hindbrain. This chain is Homeobox protein DBX2 (DBX2), found in Gallus gallus (Chicken).